The chain runs to 254 residues: 5-oxoprolinase subunit A 1 (254 aa).

This sequence belongs to the LamB/PxpA family. In terms of assembly, forms a complex composed of PxpA, PxpB and PxpC.

It carries out the reaction 5-oxo-L-proline + ATP + 2 H2O = L-glutamate + ADP + phosphate + H(+). In terms of biological role, catalyzes the cleavage of 5-oxoproline to form L-glutamate coupled to the hydrolysis of ATP to ADP and inorganic phosphate. This Burkholderia pseudomallei (strain K96243) protein is 5-oxoprolinase subunit A 1.